We begin with the raw amino-acid sequence, 466 residues long: Asparagine--tRNA ligase (466 aa).

Belongs to the class-II aminoacyl-tRNA synthetase family. As to quaternary structure, homodimer.

The protein resides in the cytoplasm. The catalysed reaction is tRNA(Asn) + L-asparagine + ATP = L-asparaginyl-tRNA(Asn) + AMP + diphosphate + H(+). In Shewanella sediminis (strain HAW-EB3), this protein is Asparagine--tRNA ligase.